The following is an 89-amino-acid chain: Protein FAM25A (89 aa).

Belongs to the FAM25 family.

This is Protein FAM25A from Mus musculus (Mouse).